A 46-amino-acid chain; its full sequence is U-limacoditoxin(6)-Dv61 (46 aa).

The first 19 residues, 1–19, serve as a signal peptide directing secretion; sequence MSKLLVLLMTTALATLAQA.

This sequence belongs to the limacoditoxin-6 family. Expressed by the venom secretory cell of the spine. The spine is a cuticular structure containing a single large nucleated venom-secreting cell at its base. It is an independent unit capable of producing, storing and injecting venom. On the back of D.vulnerans caterpillars, spines are grouped together by 50 to 100 to form scoli, of which there are eight in D.vulnerans.

It is found in the secreted. Probable toxin. Does not show insecticidal, antimicrobial and antiparasitic activities. Does not induce increase in intracellular calcium in mouse DRG neurons, suggesting that it does not induce pain. The chain is U-limacoditoxin(6)-Dv61 from Doratifera vulnerans (Mottled cup moth).